A 276-amino-acid chain; its full sequence is Insulin-induced gene 1 protein (276 aa).

2 disordered regions span residues 1–26 and 49–73; these read MPRLDDHLWRGPCAKGTKHRSHPRAS and AAHGALGTDPAHGPQSAGVGGQGSS. Residues 1 to 83 lie on the Cytoplasmic side of the membrane; the sequence is MPRLDDHLWR…SHVNSWHHHL (83 aa). The segment covering 16-25 has biased composition (basic residues); the sequence is GTKHRSHPRA. A helical membrane pass occupies residues 84–106; that stretch reads VQRSLVLFSVGVVLALVLNLLQV. The Extracellular segment spans residues 107 to 125; sequence QRNVTLFPDEVIATIFSSA. A helical membrane pass occupies residues 126-143; sequence WWVPPCCGTAAAVVGLLY. The Cytoplasmic segment spans residues 144–158; the sequence is PCIDSHLGEPHKFKR. Glycyl lysine isopeptide (Lys-Gly) (interchain with G-Cter in ubiquitin) cross-links involve residues Lys155 and Lys157. Residues 159–181 traverse the membrane as a helical segment; sequence EWASVMRCVAVFVGINHASAKLD. Residues 182–184 lie on the Extracellular side of the membrane; sequence FAN. Residues 185 to 203 traverse the membrane as a helical segment; that stretch reads NVQLSLTLAALSLGLWWTF. The Cytoplasmic portion of the chain corresponds to 204 to 208; that stretch reads DRSRS. Ser206 bears the Phosphoserine mark. The helical transmembrane segment at 209–230 threads the bilayer; that stretch reads GLGLGITIAFLATLITQLLVYN. At 231 to 244 the chain is on the extracellular side; it reads GVYQYTSPDFLYIR. The helical transmembrane segment at 245–262 threads the bilayer; that stretch reads SWLPCIFFSGGVTVGNIG. Residues 263–276 lie on the Cytoplasmic side of the membrane; it reads RQLAMGVPEKPHSD. The short motif at 270–276 is the KxHxx element; the sequence is PEKPHSD.

This sequence belongs to the INSIG family. Interacts with SCAP; interaction is direct and only takes place in the presence of sterols; it prevents interaction between SCAP and the coat protein complex II (COPII). Associates with the SCAP-SREBP complex (composed of SCAP and SREBF1/SREBP1 or SREBF2/SREBP2); association is mediated via its interaction with SCAP and only takes place in the presence of sterols. Interaction with SCAP is mutually exclusive with PAQR3. Interacts with HMGCR (via its SSD); the interaction, accelerated by sterols, leads to the recruitment of HMGCR to AMFR/gp78 for its ubiquitination by the sterol-mediated ERAD pathway. Interacts with AMFR/gp78 (via its membrane domain); the interaction recruits HMCR at the ER membrane for its ubiquitination and degradation by the sterol-mediated ERAD pathway. Interacts with SOAT2/ACAT2; leading to promote recruitment of AMFR/gp78 and subsequent ubiquitination of SOAT2/ACAT2. Interacts with RNF139. Interacts with RNF145. Phosphorylation at Ser-206 by PCK1 reduces binding to oxysterol, disrupting the interaction between INSIG1 and SCAP, thereby promoting nuclear translocation of SREBP proteins (SREBF1/SREBP1 or SREBF2/SREBP2) and subsequent transcription of downstream lipogenesis-related genes. Post-translationally, ubiquitinated by AMFR/gp78 in response to sterol deprivation, leading to its degradation: when the SCAP-SREBP complex becomes dissociated from INSIG1, INSIG1 is then ubiquitinated and degraded in proteasomes. Although ubiquitination is required for rapid INSIG1 degradation, it is not required for release of the SCAP-SREBP complex. Ubiquitinated by RNF139.

The protein localises to the endoplasmic reticulum membrane. Functionally, oxysterol-binding protein that mediates feedback control of cholesterol synthesis by controlling both endoplasmic reticulum to Golgi transport of SCAP and degradation of HMGCR. Acts as a negative regulator of cholesterol biosynthesis by mediating the retention of the SCAP-SREBP complex in the endoplasmic reticulum, thereby blocking the processing of sterol regulatory element-binding proteins (SREBPs) SREBF1/SREBP1 and SREBF2/SREBP2. Binds oxysterol, including 25-hydroxycholesterol, regulating interaction with SCAP and retention of the SCAP-SREBP complex in the endoplasmic reticulum. In presence of oxysterol, interacts with SCAP, retaining the SCAP-SREBP complex in the endoplasmic reticulum, thereby preventing SCAP from escorting SREBF1/SREBP1 and SREBF2/SREBP2 to the Golgi. Sterol deprivation or phosphorylation by PCK1 reduce oxysterol-binding, disrupting the interaction between INSIG1 and SCAP, thereby promoting Golgi transport of the SCAP-SREBP complex, followed by processing and nuclear translocation of SREBF1/SREBP1 and SREBF2/SREBP2. Also regulates cholesterol synthesis by regulating degradation of HMGCR: initiates the sterol-mediated ubiquitin-mediated endoplasmic reticulum-associated degradation (ERAD) of HMGCR via recruitment of the reductase to the ubiquitin ligases AMFR/gp78 and/or RNF139. Also regulates degradation of SOAT2/ACAT2 when the lipid levels are low: initiates the ubiquitin-mediated degradation of SOAT2/ACAT2 via recruitment of the ubiquitin ligases AMFR/gp78. This is Insulin-induced gene 1 protein from Bos taurus (Bovine).